The chain runs to 208 residues: Small ribosomal subunit protein uS3 (208 aa).

In terms of domain architecture, KH type-2 spans 16-85 (IDEYFKKELS…KPQIDVKPVE (70 aa)).

This sequence belongs to the universal ribosomal protein uS3 family. Part of the 30S ribosomal subunit.

Binds the lower part of the 30S subunit head. This is Small ribosomal subunit protein uS3 from Methanocaldococcus jannaschii (strain ATCC 43067 / DSM 2661 / JAL-1 / JCM 10045 / NBRC 100440) (Methanococcus jannaschii).